The sequence spans 470 residues: Heparan-sulfate 6-O-sulfotransferase 3 (470 aa).

The Cytoplasmic portion of the chain corresponds to 1 to 4 (MDER). The chain crosses the membrane as a helical; Signal-anchor for type II membrane protein span at residues 5-27 (FNKWLLTPVLTLLFVVIMYQYVS). Over 28–470 (PSCTSSCTNF…EDYNSQVVRW (443 aa)) the chain is Lumenal. A disordered region spans residues 36-121 (NFGEQLRSGE…EAPENGSLPR (86 aa)). Residues 88-113 (PEDEDEDPGDPEEEEEEEEEEPDPEA) show a composition bias toward acidic residues. N-linked (GlcNAc...) asparagine glycans are attached at residues Asn116 and Asn127. 151–159 (HIQKTGGTT) is a binding site for 3'-phosphoadenylyl sulfate. Residues 181 to 182 (KK), Arg198, Trp203, and His208 contribute to the substrate site. His208 functions as the Proton acceptor in the catalytic mechanism. N-linked (GlcNAc...) asparagine glycosylation occurs at Asn230. Positions 244 and 252 each coordinate 3'-phosphoadenylyl sulfate. His256 and Trp263 together coordinate substrate. N-linked (GlcNAc...) asparagine glycosylation is found at Asn323 and Asn328. 376–378 (TQF) provides a ligand contact to 3'-phosphoadenylyl sulfate. A glycan (N-linked (GlcNAc...) asparagine) is linked at Asn379. 382 to 383 (RA) provides a ligand contact to 3'-phosphoadenylyl sulfate. The interval 421-453 (TKQLEHQRDRQKRREERRLQREHRAHRWPKEDR) is disordered. Positions 422–439 (KQLEHQRDRQKRREERRL) are enriched in basic and acidic residues.

It belongs to the sulfotransferase 6 family. As to expression, ubiquitously expressed.

It localises to the membrane. The enzyme catalyses alpha-D-glucosaminyl-[heparan sulfate](n) + 3'-phosphoadenylyl sulfate = 6-sulfo-alpha-D-glucosaminyl-[heparan sulfate](n) + adenosine 3',5'-bisphosphate + H(+). In terms of biological role, 6-O-sulfation enzyme which catalyzes the transfer of sulfate from 3'-phosphoadenosine 5'-phosphosulfate (PAPS) to position 6 of the N-sulfoglucosamine residue (GlcNS) of heparan sulfate. This Mus musculus (Mouse) protein is Heparan-sulfate 6-O-sulfotransferase 3 (Hs6st3).